Consider the following 1755-residue polypeptide: Transposon Ty1-MR2 Gag-Pol polyprotein (1755 aa).

Polar residues-rich tracts occupy residues 1-10 (MESQQLSNYP), 48-60 (TKANSQQTTTPAS), and 127-152 (QSQFPQYPSSVGTPLSTPSPESGNTF). Disordered regions lie at residues 1–93 (MESQ…MMTQ), 126–173 (PQSQ…RPPP), and 352–421 (GSRN…SKST). The span at 153–165 (TDSSSADSDMTST) shows a compositional bias: low complexity. Residues 299–401 (NNGIHINNKV…NSKSKTARAH (103 aa)) form an RNA-binding region. The segment covering 402–418 (NVSTSNNSPSTDNDSIS) has biased composition (low complexity). S416 bears the Phosphoserine mark. D461 (for protease activity; shared with dimeric partner) is an active-site residue. The integrase-type zinc finger-like stretch occupies residues 583–640 (NVHTSESTRKYPYPFIHRMLAHANAQTIRYSLKNNTITYFNESDVDWSSAIDYQCPDC). Positions 660–835 (NSYEPFQYLH…AGLDISTLLP (176 aa)) constitute an Integrase catalytic domain. Residues D671 and D736 each contribute to the Mg(2+) site. Disordered regions lie at residues 956 to 1087 (SKAV…ETEK), 1092 to 1111 (RSPSIDASPPENNSSHNIVP), and 1130 to 1186 (DLPL…EDNE). The span at 960–969 (SPTDSTPPST) shows a compositional bias: low complexity. Polar residues predominate over residues 1005 to 1015 (STPQISNIEST). Positions 1038 to 1053 (ESSHASKSKDFRHSDS) are enriched in basic and acidic residues. Polar residues-rich tracts occupy residues 1054–1082 (YSENETNHTNVPISSTGGTNNKTVPQISD) and 1101–1111 (PENNSSHNIVP). Residues 1178–1212 (KKRSLEDNETEIKVSRDTWNTKNMRSLEPPRSKKR) carry the Bipartite nuclear localization signal motif. Residues 1338 to 1476 (NNYYITQLDI…DILGLEIKYQ (139 aa)) form the Reverse transcriptase Ty1/copia-type domain. Residues D1346, D1427, D1428, D1610, E1652, and D1685 each contribute to the Mg(2+) site. An RNase H Ty1/copia-type domain is found at 1610 to 1752 (DASYGNQPYY…IKTFKLLTNK (143 aa)).

In terms of assembly, the capsid protein forms a homotrimer, from which the VLPs are assembled. The protease is a homodimer, whose active site consists of two apposed aspartic acid residues. In terms of processing, initially, virus-like particles (VLPs) are composed of the structural unprocessed proteins Gag and Gag-Pol, and also contain the host initiator methionine tRNA (tRNA(i)-Met) which serves as a primer for minus-strand DNA synthesis, and a dimer of genomic Ty RNA. Processing of the polyproteins occurs within the particle and proceeds by an ordered pathway, called maturation. First, the protease (PR) is released by autocatalytic cleavage of the Gag-Pol polyprotein yielding capsid protein p45 and a Pol-p154 precursor protein. This cleavage is a prerequisite for subsequent processing of Pol-p154 at the remaining sites to release the mature structural and catalytic proteins. Maturation takes place prior to the RT reaction and is required to produce transposition-competent VLPs.

It is found in the cytoplasm. It localises to the nucleus. It catalyses the reaction DNA(n) + a 2'-deoxyribonucleoside 5'-triphosphate = DNA(n+1) + diphosphate. The catalysed reaction is Endonucleolytic cleavage to 5'-phosphomonoester.. Capsid protein (CA) is the structural component of the virus-like particle (VLP), forming the shell that encapsulates the retrotransposons dimeric RNA genome. The particles are assembled from trimer-clustered units and there are holes in the capsid shells that allow for the diffusion of macromolecules. CA also has nucleocapsid-like chaperone activity, promoting primer tRNA(i)-Met annealing to the multipartite primer-binding site (PBS), dimerization of Ty1 RNA and initiation of reverse transcription. Its function is as follows. The aspartyl protease (PR) mediates the proteolytic cleavages of the Gag and Gag-Pol polyproteins after assembly of the VLP. In terms of biological role, reverse transcriptase/ribonuclease H (RT) is a multifunctional enzyme that catalyzes the conversion of the retro-elements RNA genome into dsDNA within the VLP. The enzyme displays a DNA polymerase activity that can copy either DNA or RNA templates, and a ribonuclease H (RNase H) activity that cleaves the RNA strand of RNA-DNA heteroduplexes during plus-strand synthesis and hydrolyzes RNA primers. The conversion leads to a linear dsDNA copy of the retrotransposon that includes long terminal repeats (LTRs) at both ends. Functionally, integrase (IN) targets the VLP to the nucleus, where a subparticle preintegration complex (PIC) containing at least integrase and the newly synthesized dsDNA copy of the retrotransposon must transit the nuclear membrane. Once in the nucleus, integrase performs the integration of the dsDNA into the host genome. This is Transposon Ty1-MR2 Gag-Pol polyprotein (TY1B-MR2) from Saccharomyces cerevisiae (strain ATCC 204508 / S288c) (Baker's yeast).